The chain runs to 313 residues: uncharacterized protein (313 aa).

3 consecutive transmembrane segments (helical) span residues 41–61 (LAGT…GLMV), 68–88 (VHSV…FHYF), and 102–122 (QLLL…KLVL).

It belongs to the cytochrome b family.

It is found in the mitochondrion membrane. This is an uncharacterized protein from Arabidopsis thaliana (Mouse-ear cress).